Consider the following 477-residue polypeptide: Argininosuccinate synthase (477 aa).

ATP-binding positions include 17 to 25 (AFSGGLDTS) and Ala-43. Tyr-99 contributes to the L-citrulline binding site. ATP-binding residues include Gly-129 and Thr-131. L-aspartate-binding residues include Thr-131, Asn-135, and Asp-136. Position 135 (Asn-135) interacts with L-citrulline. Asp-136 contacts ATP. Positions 139 and 192 each coordinate L-citrulline. Asp-194 contacts ATP. 3 residues coordinate L-citrulline: Thr-201, Glu-203, and Glu-280. The disordered stretch occupies residues 450–477 (DQITENPEVQAEPEEEALDAAAMEAGTD). Low complexity predominate over residues 468 to 477 (DAAAMEAGTD).

This sequence belongs to the argininosuccinate synthase family. Type 2 subfamily. In terms of assembly, homotetramer.

It is found in the cytoplasm. The enzyme catalyses L-citrulline + L-aspartate + ATP = 2-(N(omega)-L-arginino)succinate + AMP + diphosphate + H(+). Its pathway is amino-acid biosynthesis; L-arginine biosynthesis; L-arginine from L-ornithine and carbamoyl phosphate: step 2/3. This Nocardioides sp. (strain ATCC BAA-499 / JS614) protein is Argininosuccinate synthase.